The chain runs to 148 residues: Nucleoside diphosphate kinase (148 aa).

The ATP site is built by Lys-9, Phe-57, Arg-85, Thr-91, Arg-102, and Asn-112. A Phosphothreonine modification is found at Thr-91. The Pros-phosphohistidine intermediate role is filled by His-115. Ser-122 carries the phosphoserine modification.

Belongs to the NDK family. As to quaternary structure, homotetramer. The cofactor is Mg(2+).

It is found in the cytoplasm. It carries out the reaction a 2'-deoxyribonucleoside 5'-diphosphate + ATP = a 2'-deoxyribonucleoside 5'-triphosphate + ADP. The catalysed reaction is a ribonucleoside 5'-diphosphate + ATP = a ribonucleoside 5'-triphosphate + ADP. Its function is as follows. Major role in the synthesis of nucleoside triphosphates other than ATP. The ATP gamma phosphate is transferred to the NDP beta phosphate via a ping-pong mechanism, using a phosphorylated active-site intermediate. This is Nucleoside diphosphate kinase from Bacillus anthracis.